We begin with the raw amino-acid sequence, 152 residues long: Transcriptional regulator MraZ (152 aa).

2 consecutive SpoVT-AbrB domains span residues 5 to 52 (ASAI…PFDE) and 81 to 124 (AHEC…DETA).

It belongs to the MraZ family. In terms of assembly, forms oligomers.

The protein resides in the cytoplasm. The protein localises to the nucleoid. This Shewanella sediminis (strain HAW-EB3) protein is Transcriptional regulator MraZ.